A 766-amino-acid polypeptide reads, in one-letter code: Leucine-rich repeat and fibronectin type III domain-containing protein 1 (766 aa).

Residues 1–31 form the signal peptide; that stretch reads MAPGPFSSGLLSPPPAALPFLLLLWAGASRG. Residues 32 to 65 form the LRRNT domain; that stretch reads QPCPGRCICQNVAPTLTMLCAKTGLLFVPPAIDR. The Extracellular segment spans residues 32–536; sequence QPCPGRCICQ…LRAHFLGGTM (505 aa). LRR repeat units lie at residues 66–87, 90–111, 114–135, 138–159, 163–184, 187–208, and 211–232; these read RVVE…DFAN, SLVH…AFAD, ALRA…QLRG, NLRH…AFDA, TVED…AVGQ, NLNT…TFVQ, and KLVR…GLFL. Asparagine 87 is a glycosylation site (N-linked (GlcNAc...) asparagine). Residues 252–298 form the LRRCT domain; that stretch reads NPLHCNCELLWLRRLTREDDLETCATPEHLTDRYFWSIPEEEFLCEP. One can recognise an Ig-like domain in the interval 299-386; sequence PLITRQAGGR…GEATAPVEVC (88 aa). A disulfide bridge links cysteine 321 with cysteine 370. Asparagine 343 carries N-linked (GlcNAc...) asparagine glycosylation. The segment at 397 to 422 is disordered; it reads PAAPPPLTEPGSSDIATPGRPGANDS. Residues 424–520 enclose the Fibronectin type-III domain; sequence TERRLVAAEL…GCVQFTTAGD (97 aa). A helical transmembrane segment spans residues 537–557; sequence IIAIGGVIVASVLVFIVLLMI. The Cytoplasmic portion of the chain corresponds to 558–766; sequence RYKVYGDGDS…STEWMLESTV (209 aa). Disordered regions lie at residues 568–601 and 646–742; these read RRIK…PPAP and CLLP…GEDG. Position 713 is a phosphoserine (serine 713). The segment covering 714 to 727 has biased composition (basic residues); the sequence is YPRRARRTKRHRST.

This sequence belongs to the LRFN family. As to quaternary structure, forms heteromeric complexes with LRFN2, LRFN4 and LRFN5; binding to LRFN2 and LRFN5 may be weaker than that to LRFN4. Also interacts with LRFN3. Forms homomeric complexes, but not across cell junctions. Interacts with DLG1, DLG2 and DLG4, but not with MAGI2, not CASK. Interacts with DLG3. Interacts with 2 AMPA receptor subunits GRIA1 and GRIA2 and NMDA receptor subunit GRIN1. Glycosylated. As to expression, mainly expressed in brain (at protein level) and testis. In brain, found in cerebral cortex (including pyramidal neurons), hippocampus (including CA3 and CA1 neurons), dentate gyrus, cerebellum (including Purkinje neurons) (at protein level) (at protein level). Also expressed in the olfactory bulb.

It localises to the membrane. The protein resides in the synapse. It is found in the postsynaptic density membrane. Functionally, promotes neurite outgrowth in hippocampal neurons. Involved in the regulation of the differentiation and maintenance of excitatory synapses. Induces the clustering of excitatory postsynaptic proteins, including DLG4, DLGAP1, GRIA1 and GRIN1. The protein is Leucine-rich repeat and fibronectin type III domain-containing protein 1 (Lrfn1) of Rattus norvegicus (Rat).